The following is a 194-amino-acid chain: Peptidyl-tRNA hydrolase (194 aa).

Residue Tyr16 coordinates tRNA. His21 serves as the catalytic Proton acceptor. TRNA-binding residues include Phe67, Asn69, and Asn115.

This sequence belongs to the PTH family. As to quaternary structure, monomer.

The protein resides in the cytoplasm. The enzyme catalyses an N-acyl-L-alpha-aminoacyl-tRNA + H2O = an N-acyl-L-amino acid + a tRNA + H(+). In terms of biological role, hydrolyzes ribosome-free peptidyl-tRNAs (with 1 or more amino acids incorporated), which drop off the ribosome during protein synthesis, or as a result of ribosome stalling. Its function is as follows. Catalyzes the release of premature peptidyl moieties from peptidyl-tRNA molecules trapped in stalled 50S ribosomal subunits, and thus maintains levels of free tRNAs and 50S ribosomes. This is Peptidyl-tRNA hydrolase from Salmonella heidelberg (strain SL476).